The sequence spans 363 residues: Cleavage and termination factor 1 (363 aa).

The region spanning 7–85 (NVVFVGNIPY…RKIRVEFPSN (79 aa)) is the RRM domain. Residues 291-325 (QPASATSSPPSVPQKIPSSNHKSQQANGSDQGNEG) form a disordered region. Residues 306–322 (IPSSNHKSQQANGSDQG) are compositionally biased toward polar residues.

In terms of assembly, interacts with res2.

It localises to the nucleus. In terms of biological role, component of the cleavage factor I (CF I) involved in pre-mRNA 3'-end processing. This Schizosaccharomyces pombe (strain 972 / ATCC 24843) (Fission yeast) protein is Cleavage and termination factor 1 (ctf1).